We begin with the raw amino-acid sequence, 870 residues long: Importin subunit beta-1 (870 aa).

Ala-2 carries the post-translational modification N-acetylalanine. HEAT repeat units lie at residues 4–33, 35–67, 87–126, 132–161, 172–204, 214–249, 255–304, 313–361, 365–395, 403–440, 456–492, 498–535, 542–588, 596–637, 642–679, 684–722, 730–776, and 826–868; these read EVTQ…FQEQ, LAGF…KNAL, MSTK…ELPQ, LIVS…LCEE, VNKI…YMAL, DMER…IAST, AHYM…EFAG, FTKQ…RAVG, VPHV…GSIL, LMAI…IFEF, CQQI…EDIG, TPFF…EVVR, STMV…QVII, TKSK…AYAA, AKYM…CRAL, LPYC…ALAI, WRYS…FQGF, and SHVG…TRAI. Residues 23–103 form the Importin N-terminal domain; sequence AEESLKQFQE…RAFLLKTLSA (81 aa).

This sequence belongs to the importin beta family. Importin beta-1 subfamily. Forms a complex with the importin subunits alpha IMPA1 or IMPA2, the nucleoporin NUP62 and the Ran-GTP-binding proteins RAN1, RAN2 or RAN3. Expressed in roots, cotyledons, leaves, stems, petals, stamen, stigma, siliques, embryos and guard cells.

Its subcellular location is the cytoplasm. It is found in the nucleus. Its function is as follows. Acts as a negative effector of drought tolerance. Involved in the regulation of stomatal closure and in the abscisic acid (ABA)-mediated pathway that lead to drought tolerance. Does not directly mediate nuclear import of ABI1 and ABI2 which are key regulators of the ABA signaling pathway. May be involved in nuclear translocation of other type 2C protein phosphatases that mediate ABA signaling. The sequence is that of Importin subunit beta-1 from Arabidopsis thaliana (Mouse-ear cress).